The primary structure comprises 250 residues: 2,3-bisphosphoglycerate-dependent phosphoglycerate mutase (250 aa).

Residues Arg-10–Asn-17, Thr-23–Gly-24, Arg-62, Glu-89–Tyr-92, Lys-100, Arg-116–Arg-117, and Gly-185–Asn-186 each bind substrate. The Tele-phosphohistidine intermediate role is filled by His-11. Glu-89 functions as the Proton donor/acceptor in the catalytic mechanism.

This sequence belongs to the phosphoglycerate mutase family. BPG-dependent PGAM subfamily. In terms of assembly, homodimer.

The enzyme catalyses (2R)-2-phosphoglycerate = (2R)-3-phosphoglycerate. It participates in carbohydrate degradation; glycolysis; pyruvate from D-glyceraldehyde 3-phosphate: step 3/5. Functionally, catalyzes the interconversion of 2-phosphoglycerate and 3-phosphoglycerate. The protein is 2,3-bisphosphoglycerate-dependent phosphoglycerate mutase of Shigella boydii serotype 4 (strain Sb227).